The sequence spans 116 residues: Neuropeptide Y receptor type 1 (116 aa).

The helical transmembrane segment at 1 to 6 (LVLIAV) threads the bilayer. The Cytoplasmic segment spans residues 7-24 (ERHQLIINPRGWRPSNRH). The helical transmembrane segment at 25 to 45 (AYVGIAVIWVLAVASSLPFLI) threads the bilayer. At 46-81 (YQVLTDEPFQNVTLDAFKDKYVCFDKFPSDSHRLSY) the chain is on the extracellular side. N-linked (GlcNAc...) asparagine glycosylation occurs at Asn-56. The helical transmembrane segment at 82–102 (TTLLLVLQYFGPLCFIFICYF) threads the bilayer. The Cytoplasmic segment spans residues 103–116 (KIYIRLKRRNNMMD).

It belongs to the G-protein coupled receptor 1 family.

The protein resides in the cell membrane. Its function is as follows. Receptor for neuropeptide Y and peptide YY. In Ovis aries (Sheep), this protein is Neuropeptide Y receptor type 1 (NPY1R).